We begin with the raw amino-acid sequence, 603 residues long: Sulfoacetaldehyde acetyltransferase (603 aa).

Belongs to the TPP enzyme family. Requires Mg(2+) as cofactor. The cofactor is thiamine diphosphate.

It catalyses the reaction acetyl phosphate + sulfite + H(+) = sulfoacetaldehyde + phosphate. Its function is as follows. Catalyzes the degradation of sulfoacetaldehyde into sulfite and acetyl phosphate. Involved in sulfolactate degradation. This is Sulfoacetaldehyde acetyltransferase from Roseovarius nubinhibens (strain ATCC BAA-591 / DSM 15170 / ISM).